Consider the following 540-residue polypeptide: Glucose-6-phosphate isomerase (540 aa).

The active-site Proton donor is the glutamate 350. Active-site residues include histidine 381 and lysine 503.

Belongs to the GPI family.

Its subcellular location is the cytoplasm. The enzyme catalyses alpha-D-glucose 6-phosphate = beta-D-fructose 6-phosphate. The protein operates within carbohydrate biosynthesis; gluconeogenesis. It functions in the pathway carbohydrate degradation; glycolysis; D-glyceraldehyde 3-phosphate and glycerone phosphate from D-glucose: step 2/4. Functionally, catalyzes the reversible isomerization of glucose-6-phosphate to fructose-6-phosphate. The chain is Glucose-6-phosphate isomerase from Paraburkholderia xenovorans (strain LB400).